Here is a 189-residue protein sequence, read N- to C-terminus: Tetratricopeptide repeat protein 36 (189 aa).

TPR repeat units lie at residues 51–84 (SKAL…LPER), 86–118 (SAYN…SGGR), and 123–156 (RQSF…GSPF).

Belongs to the TTC36 family.

In Homo sapiens (Human), this protein is Tetratricopeptide repeat protein 36 (TTC36).